Consider the following 330-residue polypeptide: Heat-inducible transcription repressor HrcA (330 aa).

Belongs to the HrcA family.

Its function is as follows. Negative regulator of class I heat shock genes (grpE-dnaK-dnaJ and groELS operons). Prevents heat-shock induction of these operons. This is Heat-inducible transcription repressor HrcA from Synechococcus sp. (strain RCC307).